We begin with the raw amino-acid sequence, 559 residues long: Formate--tetrahydrofolate ligase (559 aa).

ATP is bound at residue 68-75 (TPAGEGKT).

The protein belongs to the formate--tetrahydrofolate ligase family.

It catalyses the reaction (6S)-5,6,7,8-tetrahydrofolate + formate + ATP = (6R)-10-formyltetrahydrofolate + ADP + phosphate. The protein operates within one-carbon metabolism; tetrahydrofolate interconversion. The polypeptide is Formate--tetrahydrofolate ligase (Rhizobium etli (strain CIAT 652)).